The following is a 1234-amino-acid chain: 1-phosphatidylinositol 4,5-bisphosphate phosphodiesterase beta-3 (1234 aa).

Residue alanine 2 is modified to N-acetylalanine. Residues 318–468 (DMTQPLSAYF…LMGRILVKNK (151 aa)) enclose the PI-PLC X-box domain. Catalysis depends on residues histidine 332 and histidine 379. Positions 467-587 (NKKRHRPSAG…GTASSEVNAT (121 aa)) are disordered. 4 positions are modified to phosphoserine: serine 474, serine 490, serine 495, and serine 537. The span at 488 to 515 (EQSNSALSESSAATEPSSPQLGSPSSDS) shows a compositional bias: low complexity. Residues 555–567 (REDEEEDEEEEEQ) show a composition bias toward acidic residues. Residues 576–587 (DEGTASSEVNAT) are compositionally biased toward polar residues. The region spanning 590-706 (MSTLVNYIEP…GYLLKPEFMR (117 aa)) is the PI-PLC Y-box domain. Positions 707–835 (RPDKSFDPFT…RNEANQPLCL (129 aa)) constitute a C2 domain. The span at 887–908 (AGQETCQDTQSQQLGSQPSSNP) shows a compositional bias: polar residues. The disordered stretch occupies residues 887-937 (AGQETCQDTQSQQLGSQPSSNPTPSPLDASPRRPPGPTTSPASTSLSSPGQ). Positions 925-936 (TSPASTSLSSPG) are enriched in low complexity. Phosphoserine occurs at positions 926 and 1105. The disordered stretch occupies residues 1198 to 1234 (GLGDGPLVACASNGHAPGSSGHLSGADSESQEENTQL). The interval 1231 to 1234 (NTQL) is interaction with SHANK2.

Interacts with SHANK2. Interacts with LPAR2. Ca(2+) is required as a cofactor.

It is found in the cytoplasm. The protein localises to the membrane. It localises to the nucleus. It carries out the reaction a 1,2-diacyl-sn-glycero-3-phospho-(1D-myo-inositol-4,5-bisphosphate) + H2O = 1D-myo-inositol 1,4,5-trisphosphate + a 1,2-diacyl-sn-glycerol + H(+). It catalyses the reaction a 1,2-diacyl-sn-glycero-3-phospho-(1D-myo-inositol) + H2O = 1D-myo-inositol 1-phosphate + a 1,2-diacyl-sn-glycerol + H(+). With respect to regulation, activated by G(q)/G(11) G alpha proteins in response to ligand-binding to G protein-coupled receptors. Catalyzes the production of the second messenger molecules diacylglycerol (DAG) and inositol 1,4,5-trisphosphate (IP3). Key transducer of G protein-coupled receptor signaling: activated by G(q)/G(11) G alpha proteins downstream of G protein-coupled receptors activation. In neutrophils, participates in a phospholipase C-activating N-formyl peptide-activated GPCR (G protein-coupled receptor) signaling pathway by promoting RASGRP4 activation by DAG, to promote neutrophil functional responses. The protein is 1-phosphatidylinositol 4,5-bisphosphate phosphodiesterase beta-3 of Homo sapiens (Human).